The primary structure comprises 142 residues: Hemoglobin subunit alpha-1 (142 aa).

Residues 2 to 142 (VLSPADKTNV…VSTVLTSKYR (141 aa)) enclose the Globin domain. O2 is bound at residue His-59. His-88 lines the heme b pocket.

Belongs to the globin family. In terms of assembly, heterotetramer of two alpha chains and two beta chains. As to expression, red blood cells.

Involved in oxygen transport from the lung to the various peripheral tissues. In terms of biological role, hemopressin acts as an antagonist peptide of the cannabinoid receptor CNR1. Hemopressin-binding efficiently blocks cannabinoid receptor CNR1 and subsequent signaling. The sequence is that of Hemoglobin subunit alpha-1 (HBA1) from Hylobates lar (Lar gibbon).